We begin with the raw amino-acid sequence, 141 residues long: Large ribosomal subunit protein uL11 (141 aa).

Belongs to the universal ribosomal protein uL11 family. In terms of assembly, part of the ribosomal stalk of the 50S ribosomal subunit. Interacts with L10 and the large rRNA to form the base of the stalk. L10 forms an elongated spine to which L12 dimers bind in a sequential fashion forming a multimeric L10(L12)X complex. One or more lysine residues are methylated.

Forms part of the ribosomal stalk which helps the ribosome interact with GTP-bound translation factors. The sequence is that of Large ribosomal subunit protein uL11 from Streptococcus pneumoniae serotype 2 (strain D39 / NCTC 7466).